We begin with the raw amino-acid sequence, 312 residues long: Aspartate carbamoyltransferase catalytic subunit (312 aa).

Arg55 and Thr56 together coordinate carbamoyl phosphate. Lys83 lines the L-aspartate pocket. Residues Arg105, His138, and Gln141 each contribute to the carbamoyl phosphate site. 2 residues coordinate L-aspartate: Arg171 and Arg225. The carbamoyl phosphate site is built by Gly266 and Pro267.

Belongs to the aspartate/ornithine carbamoyltransferase superfamily. ATCase family. Heterododecamer (2C3:3R2) of six catalytic PyrB chains organized as two trimers (C3), and six regulatory PyrI chains organized as three dimers (R2).

The enzyme catalyses carbamoyl phosphate + L-aspartate = N-carbamoyl-L-aspartate + phosphate + H(+). The protein operates within pyrimidine metabolism; UMP biosynthesis via de novo pathway; (S)-dihydroorotate from bicarbonate: step 2/3. In terms of biological role, catalyzes the condensation of carbamoyl phosphate and aspartate to form carbamoyl aspartate and inorganic phosphate, the committed step in the de novo pyrimidine nucleotide biosynthesis pathway. The polypeptide is Aspartate carbamoyltransferase catalytic subunit (Corynebacterium glutamicum (strain R)).